Consider the following 732-residue polypeptide: Calcineurin-interacting protein 2 (732 aa).

6 disordered regions span residues 1–24 (MNRGYDSYNRSRSTSSRPLDREPY), 115–169 (DYEP…ALPK), 181–232 (QKKD…LDDR), 310–351 (ILSR…TSRR), 372–397 (RSQSLRQSRISEHSKRSLGKTTSTVS), and 426–708 (QTVT…PLEE). Residues 8 to 17 (YNRSRSTSSR) show a composition bias toward polar residues. The span at 117–129 (EPLRKEPELKEQK) shows a compositional bias: basic and acidic residues. Composition is skewed to polar residues over residues 151–163 (SGITLSPSDSSRT) and 189–208 (IPRQVSSADSQRTIRNNNEL). Low complexity predominate over residues 312–323 (SRSVSTSPSSVT). Over residues 324–351 (DNIPKTSTSRIPSSENPKTMEHTTTSRR) the composition is skewed to polar residues. The segment covering 426 to 439 (QTVTNVRVPSSRGS) has biased composition (polar residues). Basic and acidic residues-rich tracts occupy residues 526 to 538 (QSPEELDYGRFAD) and 546 to 557 (PGDHQAREEDLP). Positions 607 to 619 (SVTPSEKSLPRNS) are enriched in polar residues. Positions 688 to 705 (NSPNKSSSSSKARPSAAP) are enriched in low complexity.

Interacts with tax-6. As to expression, expressed in intestine.

The protein is Calcineurin-interacting protein 2 of Caenorhabditis elegans.